The primary structure comprises 753 residues: Polyribonucleotide nucleotidyltransferase (753 aa).

Mg(2+) contacts are provided by Asp543 and Asp549. A KH domain is found at 609 to 668 (PRITTVKIPVAKIGELIGPKGKNINALTEETGANISIEDDGTVFISAADGASAEAAIEKI). An S1 motif domain is found at 680–749 (GERFLGTVVK…NRGKISLVPV (70 aa)).

It belongs to the polyribonucleotide nucleotidyltransferase family. It depends on Mg(2+) as a cofactor.

The protein localises to the cytoplasm. The enzyme catalyses RNA(n+1) + phosphate = RNA(n) + a ribonucleoside 5'-diphosphate. Involved in mRNA degradation. Catalyzes the phosphorolysis of single-stranded polyribonucleotides processively in the 3'- to 5'-direction. In Corynebacterium glutamicum (strain ATCC 13032 / DSM 20300 / JCM 1318 / BCRC 11384 / CCUG 27702 / LMG 3730 / NBRC 12168 / NCIMB 10025 / NRRL B-2784 / 534), this protein is Polyribonucleotide nucleotidyltransferase.